A 596-amino-acid chain; its full sequence is Heat shock factor protein 5 (596 aa).

A DNA-binding region spans residues 10–200; that stretch reads NPNNFPAKLW…FHRSFRRDSL (191 aa). Positions 541 to 576 are disordered; sequence EMGPASKPSEDTGLATPARYREHRSNSQQGKSPDLH. At Ser572 the chain carries Phosphoserine.

The protein belongs to the HSF family. As to quaternary structure, homooligomer.

The protein localises to the nucleus. It is found in the chromosome. DNA-binding transcription factor that is essential for male fertility, spermatogenesis and meiotic prophase progression in spermatocytes under non-stress conditions. Positvely and negatively regulates gene expression to ensure progression of meiotic prophase beyond pachytene stage in spermatocytes. Plays a role in male germline meiotic sex chromosome remodeling and silencing through regulation of SMARCA4. The polypeptide is Heat shock factor protein 5 (HSF5) (Homo sapiens (Human)).